A 184-amino-acid polypeptide reads, in one-letter code: Protein MEH1 (184 aa).

Residue Gly-2 is the site of N-myristoyl glycine attachment. S-palmitoyl cysteine attachment occurs at residues Cys-7 and Cys-8. A coiled-coil region spans residues 30–71 (QGNANDEYDAEQMRLKEHEHEQKLLAREQELRDIVANTNDKL). Positions 89–147 (LQEALDKRQQEEGGDSREDERSAGDDNLSGHSVPSSGSAQATTHQTAPRTNTFTLLTSP) are disordered. Positions 92-112 (ALDKRQQEEGGDSREDERSAG) are enriched in basic and acidic residues. Positions 117–147 (SGHSVPSSGSAQATTHQTAPRTNTFTLLTSP) are enriched in polar residues. 2 positions are modified to phosphoserine: Ser-146 and Ser-149.

Component of the GSE complex composed of GTR1, GTR2, SLM4, MEH1 and LTV1. Component of the EGO complex, at least composed of GTR2, SLM4 and MEH1.

The protein localises to the vacuole membrane. Its function is as follows. Component of the GSE complex, a GTPase complex required for intracellular sorting of GAP1 out of the endosome. Component of the EGO complex, a complex involved in the regulation of microautophagy. This Saccharomyces cerevisiae (strain ATCC 204508 / S288c) (Baker's yeast) protein is Protein MEH1 (MEH1).